The sequence spans 218 residues: Octanoyltransferase (218 aa).

Positions 30 to 212 (ENTADEIWLV…HFYNILGYNA (183 aa)) constitute a BPL/LPL catalytic domain. Substrate-binding positions include 69 to 76 (RGGQITYH), 141 to 143 (SLG), and 154 to 156 (GLA). Cys172 (acyl-thioester intermediate) is an active-site residue.

This sequence belongs to the LipB family.

It localises to the cytoplasm. It carries out the reaction octanoyl-[ACP] + L-lysyl-[protein] = N(6)-octanoyl-L-lysyl-[protein] + holo-[ACP] + H(+). Its pathway is protein modification; protein lipoylation via endogenous pathway; protein N(6)-(lipoyl)lysine from octanoyl-[acyl-carrier-protein]: step 1/2. Catalyzes the transfer of endogenously produced octanoic acid from octanoyl-acyl-carrier-protein onto the lipoyl domains of lipoate-dependent enzymes. Lipoyl-ACP can also act as a substrate although octanoyl-ACP is likely to be the physiological substrate. The sequence is that of Octanoyltransferase from Actinobacillus pleuropneumoniae serotype 5b (strain L20).